A 342-amino-acid chain; its full sequence is Probable dual-specificity RNA methyltransferase RlmN (342 aa).

E91 (proton acceptor) is an active-site residue. The region spanning 97–326 is the Radical SAM core domain; sequence YKFGNTACVS…CTVRRELGSD (230 aa). The cysteines at positions 104 and 331 are disulfide-linked. The [4Fe-4S] cluster site is built by C111, C115, and C118. Residues 157–158, S189, 212–214, and N288 each bind S-adenosyl-L-methionine; these read GE and SLH. C331 functions as the S-methylcysteine intermediate in the catalytic mechanism.

This sequence belongs to the radical SAM superfamily. RlmN family. Requires [4Fe-4S] cluster as cofactor.

It is found in the cytoplasm. It catalyses the reaction adenosine(2503) in 23S rRNA + 2 reduced [2Fe-2S]-[ferredoxin] + 2 S-adenosyl-L-methionine = 2-methyladenosine(2503) in 23S rRNA + 5'-deoxyadenosine + L-methionine + 2 oxidized [2Fe-2S]-[ferredoxin] + S-adenosyl-L-homocysteine. The catalysed reaction is adenosine(37) in tRNA + 2 reduced [2Fe-2S]-[ferredoxin] + 2 S-adenosyl-L-methionine = 2-methyladenosine(37) in tRNA + 5'-deoxyadenosine + L-methionine + 2 oxidized [2Fe-2S]-[ferredoxin] + S-adenosyl-L-homocysteine. Functionally, specifically methylates position 2 of adenine 2503 in 23S rRNA and position 2 of adenine 37 in tRNAs. This chain is Probable dual-specificity RNA methyltransferase RlmN, found in Caldanaerobacter subterraneus subsp. tengcongensis (strain DSM 15242 / JCM 11007 / NBRC 100824 / MB4) (Thermoanaerobacter tengcongensis).